Reading from the N-terminus, the 196-residue chain is Calcium channel flower (196 aa).

The next 3 membrane-spanning stretches (helical) occupy residues L36 to I56, I67 to E89, and A114 to F134.

It belongs to the calcium channel flower family. Homomultimer. Associates with the dally/ magu complex.

It is found in the cell membrane. It localises to the cytoplasmic vesicle. The protein resides in the secretory vesicle. Its subcellular location is the synaptic vesicle membrane. The protein localises to the presynaptic cell membrane. It is found in the endosome. With respect to regulation, channel activity is inhibited by La(3+), which reduces Ca(2+) influx and thus inhibits it's function in promoting activity-dependent bulk endocytosis (ADBE) in response to high stimuli. Functionally, transmembrane protein which mediates synaptic endocytosis, fitness-based cell culling, neuronal culling, morphogen gradient scaling, and calcium transport. Regulates synaptic endocytosis and hence couples exo- with endocytosis. Controls two major modes of synaptic vesicle (SV) endocytosis in the synaptic boutons of neuromuscular junctions (NMJs); Ca(2+) channel-independent Clathrin-mediated endocytosis (CME) in response to mild stimulation, and Ca(2+) channel-dependent activity-dependent bulk endocytosis (ADBE) in response to strong stimulation. Functions in ADBE and subsequent SV reformation from bulk endosomes by initiating Ca(2+) channel-dependent phosphatidylinositol 4,5-bisphosphate (PtdIns(4,5)P2) compartmentalization in synaptic boutons. There it acts at the periactive zone to provide the low Ca(2+) levels required to initiate Calcineurin activation and upregulate PtdIns(4,5)P2. Conversely PtdIns(4,5)P2 enhances fwe Ca(2+) channel-activity, establishing a positive feedback loop that induces PtdIns(4,5)P2 microdomain at the periactive zone. These microdomains trigger bulk membrane invagination (i.e. ADBE) by triggering actin polymerization while also promoting localization of fwe to bulk endosomes, thereby removing the ADBE trigger to reduce endocytosis and prevent excess membrane uptake. PtdIns(4,5)P2 then promotes SV reformation from the bulk endosomes, to coordinate ADBE and subsequent SV reformation. Different combinations of the flower isoforms at the cell membrane are also required for the identification and elimination of suboptimal or supernumerary cells during development, regeneration, and adulthood. Required for the recognition and elimination of unfit cells in the developing wing during cell competition. In the developing pupal retina, mediates the elimination of unwanted postmitotic neurons, including supernumerary photoreceptor neurons that form at the periphery of the retina and are contained within incomplete ommatidia units. Also required for efficient elimination and replacement of old neurons by newly generated neurons during regeneration in the adult brain following mechanical injury. Downstream of the flower fitness fingerprints, cells identified as unwanted or unfit are eliminated via apoptosis through the expression of ahuizotl (azot). However, the cells marked for elimination by the flower isoforms only undergo apoptosis if additional thresholds are met; (1) their neighboring fit/healthy cells express different levels of the fwe isoforms, and (2) the levels of the protective signal SPARC expressed by the loser or unwanted cells are unable to inhibit caspase activation. These additional thresholds for flower-mediated apoptosis, allows useful cells to recover from transient and limited stress before they are unnecessarily eliminated. Functions with dally and magu in a mechanism of scaling, which utilises apoptosis to ensure that the dpp morphogen gradient, which mediates organ growth, remains proportional to the size of the growing wing. In this mechanism, fwe represses dally- and Magu-dependent activity in expanding the gradient, and dally/Magu inhibits fwe-dependent apoptosis to keep cell death rate low. When the levels of these different proteins are optimally regulated the gradient correctly scales with organ growth but when this fails, fwe-mediated apoptosis is activated to trim the developing tissue to match the correct size of the gradient. In Drosophila virilis (Fruit fly), this protein is Calcium channel flower.